A 502-amino-acid polypeptide reads, in one-letter code: Galactose/methyl galactoside import ATP-binding protein MglA (502 aa).

ABC transporter domains follow at residues 10 to 245 and 255 to 502; these read LEMT…VGRE and NTPK…SRYL. 42–49 provides a ligand contact to ATP; the sequence is GENGAGKS.

This sequence belongs to the ABC transporter superfamily. Galactose/methyl galactoside importer (TC 3.A.1.2.3) family. In terms of assembly, the complex is composed of one ATP-binding protein (MglA), two transmembrane proteins (MglC) and a solute-binding protein (MglB).

The protein resides in the cell inner membrane. It catalyses the reaction D-galactose(out) + ATP + H2O = D-galactose(in) + ADP + phosphate + H(+). It carries out the reaction methyl beta-D-galactoside(out) + ATP + H2O = methyl beta-D-galactoside(in) + ADP + phosphate + H(+). Functionally, part of the ABC transporter complex MglABC involved in galactose/methyl galactoside import. Responsible for energy coupling to the transport system. In Vibrio vulnificus (strain CMCP6), this protein is Galactose/methyl galactoside import ATP-binding protein MglA.